The sequence spans 662 residues: DCC-interacting protein 13-beta (662 aa).

The interval 1–428 (MPAVDKLLLE…NSDIEDDNIV (428 aa)) is required for RAB5A binding. Residues 3–268 (AVDKLLLEEA…ESVYTPDIDV (266 aa)) form the BAR domain. The region spanning 277–375 (LIQKTGYLNL…WICAVNNISR (99 aa)) is the PH domain. Residues 486–635 (SLLQQMFIVR…LMLSVPLTND (150 aa)) enclose the PID domain. The tract at residues 642–662 (NDQADDTGGSPSENRGAESEA) is disordered.

Homodimer. Homotetramer. Binds RAB5A/Rab5 through an N-terminal domain. This interaction is essential for its recruitment to endosomal membranes as well as its role in cell proliferation. Binds subunits of the NuRD/MeCP1 complex. Interacts with FSHR; interaction is independent of follicle stimulating hormone stimulation. Interacts with APPL1; the interaction is decreased by adiponectin in a time-dependent manner. Forms a complex comprising APPL1, RUVBL2, CTNNB1, HDAC1 and HDAC2; interaction reduces interaction between CTNNB1, HDAC1, HDAC2 and RUVBL2 leading to the decrease of deacetylase activity of this complex; affects the recruitment of repressive complexes to the Wnt target genes. Interacts (via BAR domain) with TBC1D1; interaction is dependent of TBC1D1 phosphorylation at 'Ser-235'; interaction diminishes the phosphorylation of TBC1D1 at 'Thr-596', resulting in inhibition of SLC2A4 translocation and glucose uptake. Interacts with ANXA2; targets APPL2 to endosomes and acting in parallel to RAB5A. Interacts with RAB31 (in GTP-bound form); interaction contributes to or enhances recruitment of APPL2 to the phagosomes; interaction enhances Fc-gamma receptor-mediated phagocytosis through PI3K/Akt signaling in macrophages. Interacts with PIK3R1; forms a complex with PIK3R1 and APPL1. Interacts (via BAR domain) with ADIPOR1; hinders the accessibility of APPL1 to ADIPOR1; negatively regulates adiponectin signaling; ADIPOQ dissociates this interaction and facilitates the recruitment of APPL1 to ADIPOR1. Interacts (via BAR domain) with ADIPOR2; ADIPOQ dissociates this interaction. In terms of tissue distribution, expressed in insulin-target tissues including skeletal muscle, liver, fat, and brain. Highly expressed in kidney and pancreas. Abundantly expressed in the ventromedial hypothalamus (VMH), barely detectable in the arcuate nucleus (ARC) and paraventricular nucleus (PVN) of the hypothalamus. Also expressed in pancreatic beta-cells.

It is found in the early endosome membrane. It localises to the nucleus. The protein localises to the cell membrane. The protein resides in the endosome membrane. Its subcellular location is the cytoplasm. It is found in the cytoplasmic vesicle. It localises to the phagosome. The protein localises to the cell projection. The protein resides in the ruffle. Its subcellular location is the ruffle membrane. It is found in the phagosome membrane. Multifunctional adapter protein that binds to various membrane receptors, nuclear factors and signaling proteins to regulate many processes, such as cell proliferation, immune response, endosomal trafficking and cell metabolism. Regulates signaling pathway leading to cell proliferation through interaction with RAB5A and subunits of the NuRD/MeCP1 complex. Plays a role in immune response by modulating phagocytosis, inflammatory and innate immune responses. In macrophages, enhances Fc-gamma receptor-mediated phagocytosis through interaction with RAB31 leading to activation of PI3K/Akt signaling. In response to LPS, modulates inflammatory responses by playing a key role on the regulation of TLR4 signaling and in the nuclear translocation of RELA/NF-kappa-B p65 and the secretion of pro- and anti-inflammatory cytokines. Also functions as a negative regulator of innate immune response via inhibition of AKT1 signaling pathway by forming a complex with APPL1 and PIK3R1. Plays a role in endosomal trafficking of TGFBR1 from the endosomes to the nucleus. Plays a role in cell metabolism by regulating adiponectin and insulin signaling pathways and adaptative thermogenesis. In muscle, negatively regulates adiponectin-simulated glucose uptake and fatty acid oxidation by inhibiting adiponectin signaling pathway through APPL1 sequestration thereby antagonizing APPL1 action. In muscles, negatively regulates insulin-induced plasma membrane recruitment of GLUT4 and glucose uptake through interaction with TBC1D1. Plays a role in cold and diet-induced adaptive thermogenesis by activating ventromedial hypothalamus (VMH) neurons throught AMPK inhibition which enhances sympathetic outflow to subcutaneous white adipose tissue (sWAT), sWAT beiging and cold tolerance. Also plays a role in other signaling pathways namely Wnt/beta-catenin, HGF and glucocorticoid receptor signaling. Positive regulator of beta-catenin/TCF-dependent transcription through direct interaction with RUVBL2/reptin resulting in the relief of RUVBL2-mediated repression of beta-catenin/TCF target genes by modulating the interactions within the beta-catenin-reptin-HDAC complex. May affect adult neurogenesis in hippocampus and olfactory system via regulating the sensitivity of glucocorticoid receptor. Required for fibroblast migration through HGF cell signaling. The polypeptide is DCC-interacting protein 13-beta (Mus musculus (Mouse)).